Here is an 88-residue protein sequence, read N- to C-terminus: Small ribosomal subunit protein uS12 (88 aa).

Residues 1 to 24 (RKGRRDKIGKVKTAALKGSPQRRG) form a disordered region. At D81 the chain carries 3-methylthioaspartic acid.

Belongs to the universal ribosomal protein uS12 family. Part of the 30S ribosomal subunit. Contacts proteins S8 and S17. May interact with IF1 in the 30S initiation complex.

In terms of biological role, with S4 and S5 plays an important role in translational accuracy. Functionally, interacts with and stabilizes bases of the 16S rRNA that are involved in tRNA selection in the A site and with the mRNA backbone. Located at the interface of the 30S and 50S subunits, it traverses the body of the 30S subunit contacting proteins on the other side and probably holding the rRNA structure together. The combined cluster of proteins S8, S12 and S17 appears to hold together the shoulder and platform of the 30S subunit. In Mycobacterium szulgai, this protein is Small ribosomal subunit protein uS12 (rpsL).